The following is a 731-amino-acid chain: Golgin subfamily A member 5 (731 aa).

Ser-2 is subject to N-acetylserine. The Cytoplasmic portion of the chain corresponds to Ser-2–Arg-698. Arg-89 is modified (dimethylated arginine). Residues Glu-93–His-222 form a disordered region. Ser-116 is subject to Phosphoserine. The span at Pro-134–Lys-146 shows a compositional bias: basic and acidic residues. Over residues Thr-147 to Thr-167 the composition is skewed to low complexity. Residues Glu-173–Asp-188 are compositionally biased toward polar residues. Over residues Ser-189–Lys-199 the composition is skewed to basic and acidic residues. The stretch at Asn-216–Ser-632 forms a coiled coil. A helical; Anchor for type IV membrane protein membrane pass occupies residues Val-699 to Tyr-719. The Lumenal portion of the chain corresponds to Thr-720–Lys-731.

In terms of assembly, homodimer. Interacts with RAB1A that has been activated by GTP-binding, and possibly also with OCRL1. Interacts with isoform CASP of CUX1. In terms of processing, highly phosphorylated during mitosis. Phosphorylation is barely detectable during interphase. Ubiquitous. Highly expressed in seminiferous tubules and Leydig cells in testis, and detected at much lower levels in the other tissues tested. Expression is very low or not detectable in spermatozoa.

It is found in the golgi apparatus membrane. Its function is as follows. Involved in maintaining Golgi structure. Stimulates the formation of Golgi stacks and ribbons. Involved in intra-Golgi retrograde transport. This Homo sapiens (Human) protein is Golgin subfamily A member 5 (GOLGA5).